Reading from the N-terminus, the 459-residue chain is Glycosyl hydrolase family 109 protein 1 (459 aa).

A signal peptide (tat-type signal) is located at residues 1 to 31 (MHNIHRRHFLKAAGAVTAGLVTANIALNANA). NAD(+) is bound by residues 64–65 (ER), Asp-86, 135–138 (WEWH), 155–156 (EV), and Asn-184. Substrate is bound by residues Tyr-213, Arg-232, 244–247 (YPTH), and Tyr-326. An NAD(+)-binding site is contributed by Tyr-244.

Belongs to the Gfo/Idh/MocA family. Glycosyl hydrolase 109 subfamily. The cofactor is NAD(+). In terms of processing, predicted to be exported by the Tat system. The position of the signal peptide cleavage has not been experimentally proven.

In terms of biological role, glycosidase. This Shewanella sp. (strain MR-7) protein is Glycosyl hydrolase family 109 protein 1.